A 393-amino-acid chain; its full sequence is Geranylgeranyl pyrophosphate synthase 2 (393 aa).

3 residues coordinate isopentenyl diphosphate: Lys-109, Arg-112, and His-141. Asp-148 and Asp-152 together coordinate Mg(2+). Arg-157 provides a ligand contact to dimethylallyl diphosphate. Arg-158 serves as a coordination point for isopentenyl diphosphate. Lys-235, Thr-236, and Gln-275 together coordinate dimethylallyl diphosphate. A Mg(2+)-binding site is contributed by Asp-278. Dimethylallyl diphosphate-binding residues include Asn-282, Lys-292, and Lys-302.

It belongs to the FPP/GGPP synthase family. It depends on Mg(2+) as a cofactor.

The enzyme catalyses isopentenyl diphosphate + dimethylallyl diphosphate = (2E)-geranyl diphosphate + diphosphate. The catalysed reaction is isopentenyl diphosphate + (2E)-geranyl diphosphate = (2E,6E)-farnesyl diphosphate + diphosphate. It carries out the reaction isopentenyl diphosphate + (2E,6E)-farnesyl diphosphate = (2E,6E,10E)-geranylgeranyl diphosphate + diphosphate. Its pathway is plant hormone biosynthesis; gibberellin biosynthesis. In terms of biological role, geranylgeranyl pyrophosphate synthase; part of the gene cluster that mediates the biosynthesis of gibberellins (GAs), diterpenoids that may provide a selective advantage during infection of the preferred host plant, rice. Gibberellins (GAs) are diterpenoids and are synthesized via the mevalonate pathway. Biosynthesis of the major metabolite GA3 (gibberellic acid) from geranylgeranyl diphosphate (GGPP) requires 13 steps. The GGPP produced by the geranylgeranyl diphosphate synthase GGS2 is converted to ent-kaurene via ent-copalyldiphosphate in a two-step cyclization reaction performed by the bifunctional ent-copalyl diphosphate synthase/ent-kaurene synthase enzyme (CPS/KS). Ent-Kaurene is metabolized to GAs by a series of oxidation reactions catalyzed by cytochrome P450 monooxygenases. Cytochrome P450 monooxygenase P450-4 is an ent-kaurene oxidase that catalyzes the three oxidation steps between ent-kaurene and ent-kaurenoic acid. The highly multifunctional cytochrome P450 monooxygenase P450-1 then catalyzes four steps involving oxidation at two carbon atoms, in the main pathway from ent-kaurenoic acid to GA14 via GA12-aldehyde as well as producing kaurenolides and fujenoic acids as by-products. The cytochrome P450 monooxygenase P450-2 then converts GA14 to GA4 by removal of C-20. GA4 is further converted to GA7 by the GA4 desaturase DES via 1,2-desaturation before cytochrome P450 monooxygenase P450-3, a 13-hydroxylase, hydroxylates GA7 to GA3, the final product of the GA-biosynthetic pathway. This Gibberella fujikuroi (strain CBS 195.34 / IMI 58289 / NRRL A-6831) (Bakanae and foot rot disease fungus) protein is Geranylgeranyl pyrophosphate synthase 2.